The sequence spans 313 residues: Porphobilinogen deaminase (313 aa).

S-(dipyrrolylmethanemethyl)cysteine is present on Cys242.

It belongs to the HMBS family. In terms of assembly, monomer. Dipyrromethane serves as cofactor.

The catalysed reaction is 4 porphobilinogen + H2O = hydroxymethylbilane + 4 NH4(+). The protein operates within porphyrin-containing compound metabolism; protoporphyrin-IX biosynthesis; coproporphyrinogen-III from 5-aminolevulinate: step 2/4. Functionally, tetrapolymerization of the monopyrrole PBG into the hydroxymethylbilane pre-uroporphyrinogen in several discrete steps. The sequence is that of Porphobilinogen deaminase from Escherichia coli (strain K12 / MC4100 / BW2952).